The primary structure comprises 565 residues: Periplasmic trehalase (565 aa).

The signal sequence occupies residues 1 to 30 (MKSPAPSRPQKMALIPACIFLCFAALSVQA). Substrate-binding positions include Arg-152, 159–160 (WD), Asn-196, 205–207 (RSQ), 277–279 (RPE), and Gly-310. Active-site proton donor/acceptor residues include Asp-312 and Glu-496. A substrate-binding site is contributed by Glu-511. Residues 539–565 (CDNVPATRPLSESTTQPVKQKEAEPTP) form a disordered region.

Belongs to the glycosyl hydrolase 37 family. Monomer.

It is found in the periplasm. It carries out the reaction alpha,alpha-trehalose + H2O = alpha-D-glucose + beta-D-glucose. Functionally, provides the cells with the ability to utilize trehalose at high osmolarity by splitting it into glucose molecules that can subsequently be taken up by the phosphotransferase-mediated uptake system. This chain is Periplasmic trehalase, found in Escherichia coli O6:H1 (strain CFT073 / ATCC 700928 / UPEC).